A 244-amino-acid chain; its full sequence is Chalcone--flavanone isomerase (244 aa).

Substrate-binding residues include T45, N110, and S187.

Belongs to the chalcone isomerase family.

It catalyses the reaction a chalcone = a flavanone.. It functions in the pathway secondary metabolite biosynthesis; flavonoid biosynthesis. Its function is as follows. Catalyzes the intramolecular cyclization of bicyclic chalcones into tricyclic (S)-flavanones. Responsible for the isomerization of 4,2',4',6'-tetrahydroxychalcone (also termed chalcone) into naringenin. This chain is Chalcone--flavanone isomerase (CHI), found in Nicotiana tabacum (Common tobacco).